The following is a 507-amino-acid chain: Extracellular elastase (507 aa).

Residues 1–28 form the signal peptide; it reads MKNFSKFALTSIAALTVASPLVNTEVDA. The propeptide occupies 29–207; the sequence is KDKVSATQNI…VVDKLNMIKE (179 aa). Asp347 lines the Ca(2+) pocket. His351 serves as a coordination point for Zn(2+). Glu352 is an active-site residue. His355 and Glu375 together coordinate Zn(2+). Residues Asp386, Glu388, Asp389, Leu391, Glu394, Tyr397, Thr398, Val401, and Asp404 each contribute to the Ca(2+) site. His435 serves as the catalytic Proton donor.

This sequence belongs to the peptidase M4 family. It depends on Ca(2+) as a cofactor. Zn(2+) is required as a cofactor.

The protein resides in the secreted. Functionally, protease that has a low substrate specificity. Glucagon is preferentially cleaved between aromatic (Phe) and hydrophobic (Val) amino acids. Hydrolyzes casein and elastin. This chain is Extracellular elastase (sepA), found in Staphylococcus epidermidis.